A 228-amino-acid polypeptide reads, in one-letter code: NAD(P)H-hydrate epimerase (228 aa).

The region spanning 10–214 (AIDIDQELFN…DLERKYDLKI (205 aa)) is the YjeF N-terminal domain. 58-62 (NNGGD) provides a ligand contact to (6S)-NADPHX. 2 residues coordinate K(+): Asn-59 and Asp-123. (6S)-NADPHX-binding positions include 127-133 (GFSFKPP) and Asp-156. A K(+)-binding site is contributed by Ser-159.

The protein belongs to the NnrE/AIBP family. It depends on K(+) as a cofactor.

The catalysed reaction is (6R)-NADHX = (6S)-NADHX. It carries out the reaction (6R)-NADPHX = (6S)-NADPHX. In terms of biological role, catalyzes the epimerization of the S- and R-forms of NAD(P)HX, a damaged form of NAD(P)H that is a result of enzymatic or heat-dependent hydration. This is a prerequisite for the S-specific NAD(P)H-hydrate dehydratase to allow the repair of both epimers of NAD(P)HX. The protein is NAD(P)H-hydrate epimerase of Pediculus humanus subsp. corporis (Body louse).